Here is a 687-residue protein sequence, read N- to C-terminus: Glycine--tRNA ligase beta subunit (687 aa).

Belongs to the class-II aminoacyl-tRNA synthetase family. Tetramer of two alpha and two beta subunits.

The protein localises to the cytoplasm. The enzyme catalyses tRNA(Gly) + glycine + ATP = glycyl-tRNA(Gly) + AMP + diphosphate. The polypeptide is Glycine--tRNA ligase beta subunit (Lactobacillus acidophilus (strain ATCC 700396 / NCK56 / N2 / NCFM)).